The primary structure comprises 358 residues: DnaJ homolog subfamily B member 11 (358 aa).

An N-terminal signal peptide occupies residues Met-1–Ala-22. Residues Asp-25–Gly-90 form the J domain. Position 188 is a phosphothreonine (Thr-188). Asn-261 is a glycosylation site (N-linked (GlcNAc...) asparagine).

As to quaternary structure, part of a large chaperone multiprotein complex comprising DNAJB11, HSP90B1, HSPA5, HYOU, PDIA2, PDIA4, PDIA6, PPIB, SDF2L1, UGGT1 and very small amounts of ERP29, but not, or at very low levels, CALR nor CANX. Binds to denatured substrates in an ATP-independent manner. Interacts via the J domain with HSPA5 in an ATP-dependent manner. Post-translationally, contains high-mannose Endo H-sensitive carbohydrates. In terms of processing, cys-169, Cys-171, Cys-193 and Cys-196 form intramolecular disulfide bonds. The preferential partner for each Cys is not known. Thr-188 was reported to be phosphorylated upon DNA damage by ATM or ATR; however as this position has been shown to be in the ER lumen, the in vivo relevance is not proven. As to expression, widely expressed.

It localises to the endoplasmic reticulum lumen. Its function is as follows. As a co-chaperone for HSPA5 it is required for proper folding, trafficking or degradation of proteins. Binds directly to both unfolded proteins that are substrates for ERAD and nascent unfolded peptide chains, but dissociates from the HSPA5-unfolded protein complex before folding is completed. May help recruiting HSPA5 and other chaperones to the substrate. Stimulates HSPA5 ATPase activity. It is necessary for maturation and correct trafficking of PKD1. This Homo sapiens (Human) protein is DnaJ homolog subfamily B member 11 (DNAJB11).